Consider the following 632-residue polypeptide: 1-deoxy-D-xylulose-5-phosphate synthase (632 aa).

Thiamine diphosphate contacts are provided by residues histidine 79 and 120–122; that span reads GHA. Aspartate 152 is a binding site for Mg(2+). Residues 153-154, asparagine 181, phenylalanine 293, and glutamate 377 contribute to the thiamine diphosphate site; that span reads GS. Asparagine 181 is a binding site for Mg(2+).

It belongs to the transketolase family. DXPS subfamily. As to quaternary structure, homodimer. The cofactor is Mg(2+). Requires thiamine diphosphate as cofactor.

It carries out the reaction D-glyceraldehyde 3-phosphate + pyruvate + H(+) = 1-deoxy-D-xylulose 5-phosphate + CO2. The protein operates within metabolic intermediate biosynthesis; 1-deoxy-D-xylulose 5-phosphate biosynthesis; 1-deoxy-D-xylulose 5-phosphate from D-glyceraldehyde 3-phosphate and pyruvate: step 1/1. Functionally, catalyzes the acyloin condensation reaction between C atoms 2 and 3 of pyruvate and glyceraldehyde 3-phosphate to yield 1-deoxy-D-xylulose-5-phosphate (DXP). The sequence is that of 1-deoxy-D-xylulose-5-phosphate synthase from Phocaeicola vulgatus (strain ATCC 8482 / DSM 1447 / JCM 5826 / CCUG 4940 / NBRC 14291 / NCTC 11154) (Bacteroides vulgatus).